The following is a 416-amino-acid chain: Glutamyl-tRNA reductase 1 (416 aa).

Residues 57 to 60 (TCNR), S113, 118 to 120 (DFE), and Q124 each bind substrate. The active-site Nucleophile is C58. Position 193 to 198 (193 to 198 (GTGKIG)) interacts with NADP(+).

Belongs to the glutamyl-tRNA reductase family. As to quaternary structure, homodimer.

The enzyme catalyses (S)-4-amino-5-oxopentanoate + tRNA(Glu) + NADP(+) = L-glutamyl-tRNA(Glu) + NADPH + H(+). It participates in porphyrin-containing compound metabolism; protoporphyrin-IX biosynthesis; 5-aminolevulinate from L-glutamyl-tRNA(Glu): step 1/2. In terms of biological role, catalyzes the NADPH-dependent reduction of glutamyl-tRNA(Glu) to glutamate 1-semialdehyde (GSA). In Flavobacterium johnsoniae (strain ATCC 17061 / DSM 2064 / JCM 8514 / BCRC 14874 / CCUG 350202 / NBRC 14942 / NCIMB 11054 / UW101) (Cytophaga johnsonae), this protein is Glutamyl-tRNA reductase 1.